Reading from the N-terminus, the 215-residue chain is Peroxiredoxin (215 aa).

One can recognise a Thioredoxin domain in the interval 6–161 (PLIGEEFPRV…ILRAVKALQT (156 aa)). C48 functions as the Cysteine sulfenic acid (-SOH) intermediate in the catalytic mechanism. R124 provides a ligand contact to substrate. A disulfide bridge links C205 with C211.

The protein belongs to the peroxiredoxin family. Prx6 subfamily. As to quaternary structure, homodecamer. Pentamer of dimers that assemble into a ring structure.

It localises to the cytoplasm. The enzyme catalyses a hydroperoxide + [thioredoxin]-dithiol = an alcohol + [thioredoxin]-disulfide + H2O. Functionally, thiol-specific peroxidase that catalyzes the reduction of hydrogen peroxide and organic hydroperoxides to water and alcohols, respectively. Plays a role in cell protection against oxidative stress by detoxifying peroxides. This Thermotoga maritima (strain ATCC 43589 / DSM 3109 / JCM 10099 / NBRC 100826 / MSB8) protein is Peroxiredoxin.